The following is an 82-amino-acid chain: Sec-independent protein translocase protein TatA (82 aa).

A helical membrane pass occupies residues 2-22 (GFGGISLWQLLIVLAIIVLLF). Positions 43–82 (KAMSDEKNTDKEKPEQIQKSEESAPLDSAHTEKNKDNNKV) are disordered. 2 stretches are compositionally biased toward basic and acidic residues: residues 44–64 (AMSDEKNTDKEKPEQIQKSEE) and 71–82 (AHTEKNKDNNKV).

The protein belongs to the TatA/E family. In terms of assembly, the Tat system comprises two distinct complexes: a TatABC complex, containing multiple copies of TatA, TatB and TatC subunits, and a separate TatA complex, containing only TatA subunits. Substrates initially bind to the TatABC complex, which probably triggers association of the separate TatA complex to form the active translocon.

Its subcellular location is the cell inner membrane. Its function is as follows. Part of the twin-arginine translocation (Tat) system that transports large folded proteins containing a characteristic twin-arginine motif in their signal peptide across membranes. TatA could form the protein-conducting channel of the Tat system. The protein is Sec-independent protein translocase protein TatA of Pseudoalteromonas translucida (strain TAC 125).